We begin with the raw amino-acid sequence, 666 residues long: ATP synthase subunit alpha 2 (666 aa).

182–189 (GDRATGKT) lines the ATP pocket. A disordered region spans residues 527–666 (MPAEDAAGDI…DAEAEARHKR (140 aa)). A compositionally biased stretch (basic and acidic residues) spans 545-590 (ARGDADRDADHGANREVSREVSPEASREVSREVSCEVSHEADRDAA). The span at 591-601 (ADAARVAGRAP) shows a compositional bias: low complexity. The span at 623–641 (ADGDRASASRPRPDARGDA) shows a compositional bias: basic and acidic residues.

Belongs to the ATPase alpha/beta chains family. In terms of assembly, F-type ATPases have 2 components, CF(1) - the catalytic core - and CF(0) - the membrane proton channel. CF(1) has five subunits: alpha(3), beta(3), gamma(1), delta(1), epsilon(1). CF(0) has three main subunits: a(1), b(2) and c(9-12). The alpha and beta chains form an alternating ring which encloses part of the gamma chain. CF(1) is attached to CF(0) by a central stalk formed by the gamma and epsilon chains, while a peripheral stalk is formed by the delta and b chains.

Its subcellular location is the cell inner membrane. The enzyme catalyses ATP + H2O + 4 H(+)(in) = ADP + phosphate + 5 H(+)(out). Functionally, produces ATP from ADP in the presence of a proton gradient across the membrane. The alpha chain is a regulatory subunit. The sequence is that of ATP synthase subunit alpha 2 from Burkholderia pseudomallei (strain K96243).